We begin with the raw amino-acid sequence, 528 residues long: MFGAAGRQPIGAPAAGNSWHFSRTMEELVHDLVSALEESSEQARGGFAETGDHSRSISCPLKRQARKRRGRKRRSYNVHHPWETGHCLSEGSDSSLEEPSKDYRENHNNNKKDHSDSDDQMLVAKRRPSSNLNNNVRGKRPLWHESDFAVDNVGNRTLRRRRKVKRMAVDLPQDISNKRTMTQPPEGCRDQDMDSDRAYQYQEFTKNKVKKRKLKIIRQGPKIQDEGVVLESEETNQTNKDKMECEEQKVSDELMSESDSSSLSSTDAGLFTNDEGRQGDDEQSDWFYEKESGGACGITGVVPWWEKEDPTELDKNVPDPVFESILTGSFPLMSHPSRRGFQARLSRLHGMSSKNIKKSGGTPTSMVPIPGPVGNKRMVHFSPDSHHHDHWFSPGARTEHDQHQLLRDNRAERGHKKNCSVRTASRQTSMHLGSLCTGDIKRRRKAAPLPGPTTAGFVGENAQPILENNIGNRMLQNMGWTPGSGLGRDGKGISEPIQAMQRPKGLGLGFPLPKSTSATTTPNAGKSA.

Positions 36–119 (LEESSEQARG…NKKDHSDSDD (84 aa)) are disordered. Positions 63–77 (RQARKRRGRKRRSYN) are enriched in basic residues. Positions 98-117 (EPSKDYRENHNNNKKDHSDS) are enriched in basic and acidic residues. 4 positions are modified to phosphoserine: serine 115, serine 117, serine 146, and serine 195. 2 disordered regions span residues 232–282 (SEET…GDDE) and 487–528 (GRDG…GKSA). The span at 239–252 (NKDKMECEEQKVSD) shows a compositional bias: basic and acidic residues. In terms of domain architecture, G-patch spans 467–513 (ENNIGNRMLQNMGWTPGSGLGRDGKGISEPIQAMQRPKGLGLGFPLP). The segment covering 514 to 528 (KSTSATTTPNAGKSA) has biased composition (polar residues).

As to quaternary structure, interacts with DHX15. In terms of tissue distribution, testis.

It is found in the nucleus speckle. The protein localises to the nucleus. The protein resides in the nucleolus. Enhances the ATPase activity of DHX15 in vitro. The chain is G patch domain-containing protein 2 (GPATCH2) from Homo sapiens (Human).